The chain runs to 231 residues: 7-cyano-7-deazaguanine synthase (231 aa).

8–18 (FSGGQDSTTCL) serves as a coordination point for ATP. Cys188, Cys197, Cys200, and Cys203 together coordinate Zn(2+).

It belongs to the QueC family. It depends on Zn(2+) as a cofactor.

The enzyme catalyses 7-carboxy-7-deazaguanine + NH4(+) + ATP = 7-cyano-7-deazaguanine + ADP + phosphate + H2O + H(+). The protein operates within purine metabolism; 7-cyano-7-deazaguanine biosynthesis. Catalyzes the ATP-dependent conversion of 7-carboxy-7-deazaguanine (CDG) to 7-cyano-7-deazaguanine (preQ(0)). This chain is 7-cyano-7-deazaguanine synthase, found in Escherichia coli O1:K1 / APEC.